A 654-amino-acid chain; its full sequence is Interferon-induced GTP-binding protein Mx1 (654 aa).

The residue at position 1 (Met1) is an N-acetylmethionine. Composition is skewed to basic and acidic residues over residues 1–12 and 23–32; these read MVLSDLDIKEPD and DMVREHETES. The segment at 1–33 is disordered; the sequence is MVLSDLDIKEPDSPESGLNGSDDMVREHETESK. One can recognise a Dynamin-type G domain in the interval 62–335; it reads DLALPAIAVI…LIMHICKTLP (274 aa). The segment at 72-79 is G1 motif; the sequence is GDQSSGKS. 72-79 serves as a coordination point for GTP; that stretch reads GDQSSGKS. The interval 97–99 is G2 motif; that stretch reads VTR. The interval 173-176 is G3 motif; that stretch reads DLPG. GTP contacts are provided by residues 173–177 and 242–245; these read DLPGI and TKPD. The tract at residues 242–245 is G4 motif; it reads TKPD. A G5 motif region spans residues 274–277; that stretch reads KCRG. Positions 336–361 are bundle signaling element (BSE); the sequence is LLENQIKETHQRITEELQKYGKDIPE. Residues 361 to 528 are middle domain; it reads EEESEKMFSL…HFQMEQLVYC (168 aa). The tract at residues 362–624 is stalk; sequence EESEKMFSLI…KDQYDWLLKE (263 aa). A disordered region spans residues 544–563; that stretch reads EAEEEKKKKSNHYYQSEDSE. The interval 549 to 552 is critical for lipid-binding; that stretch reads KKKK. The region spanning 566-654 is the GED domain; it reads TAEIFQHLMA…ARQRLAKFPG (89 aa).

This sequence belongs to the TRAFAC class dynamin-like GTPase superfamily. Dynamin/Fzo/YdjA family. As to quaternary structure, homooligomer. Oligomerizes into multimeric filamentous or ring-like structures by virtue of its stalk domain. Oligomerization is critical for GTPase activity, protein stability, and recognition of viral target structures. Interacts with TRPC1, TRPC3, TRPC4, TRPC5, TRPC6 and TRPC7. Interacts with HSPA5. Interacts with DDX39A and DDX39B. Interacts with TUBB/TUBB5. Post-translationally, ISGylated.

It is found in the cytoplasm. The protein resides in the endoplasmic reticulum membrane. The protein localises to the perinuclear region. In terms of biological role, interferon-induced dynamin-like GTPase with antiviral activity. The polypeptide is Interferon-induced GTP-binding protein Mx1 (MX1) (Ovis aries (Sheep)).